The following is a 161-amino-acid chain: Cyclin-dependent protein kinase inhibitor SMR12 (161 aa).

A compositionally biased stretch (acidic residues) spans 84 to 93 (EEEEVVEEEN). The tract at residues 84–106 (EEEEVVEEENDGFKTPTRPENRI) is disordered.

Functionally, probable cyclin-dependent protein kinase (CDK) inhibitor that functions as a repressor of mitosis in the endoreduplication cell cycle. This chain is Cyclin-dependent protein kinase inhibitor SMR12, found in Arabidopsis thaliana (Mouse-ear cress).